A 233-amino-acid polypeptide reads, in one-letter code: Ribonuclease 3 (233 aa).

One can recognise an RNase III domain in the interval 4–126; sequence LNKLMERLGH…IVGAIYIDAG (123 aa). Residue Glu39 coordinates Mg(2+). Asp43 is a catalytic residue. Residues Asp112 and Glu115 each coordinate Mg(2+). Glu115 is an active-site residue. Residues 153 to 222 form the DRBM domain; the sequence is DAKSLLQEWL…AKRFLELLDD (70 aa).

Belongs to the ribonuclease III family. In terms of assembly, homodimer. The cofactor is Mg(2+).

The protein resides in the cytoplasm. It catalyses the reaction Endonucleolytic cleavage to 5'-phosphomonoester.. In terms of biological role, digests double-stranded RNA. Involved in the processing of primary rRNA transcript to yield the immediate precursors to the large and small rRNAs (23S and 16S). Processes some mRNAs, and tRNAs when they are encoded in the rRNA operon. Processes pre-crRNA and tracrRNA of type II CRISPR loci if present in the organism. The chain is Ribonuclease 3 from Coxiella burnetii (strain CbuK_Q154) (Coxiella burnetii (strain Q154)).